The sequence spans 2226 residues: Rotatin (2226 aa).

The segment at 295 to 346 (EARGPYHSPNPSPGSSSSRPSVVGRTGQRPRGDGQDWDAVSSSGSSSHTHVN) is disordered. Positions 307-319 (PGSSSSRPSVVGR) are enriched in low complexity. The residue at position 311 (Ser-311) is a Phosphoserine. Lys-813 is modified (N6-acetyllysine).

This sequence belongs to the rotatin family. Interacts with PPP1R35; this interaction allows the mutual recruitment to the centriole.

The protein localises to the cytoplasm. Its subcellular location is the cytoskeleton. It is found in the cilium basal body. Its function is as follows. Involved in the genetic cascade that governs left-right specification. Required for correct asymmetric expression of NODAL, LEFTY and PITX2. This is Rotatin from Mus musculus (Mouse).